We begin with the raw amino-acid sequence, 167 residues long: SsrA-binding protein (167 aa).

This sequence belongs to the SmpB family.

It is found in the cytoplasm. Required for rescue of stalled ribosomes mediated by trans-translation. Binds to transfer-messenger RNA (tmRNA), required for stable association of tmRNA with ribosomes. tmRNA and SmpB together mimic tRNA shape, replacing the anticodon stem-loop with SmpB. tmRNA is encoded by the ssrA gene; the 2 termini fold to resemble tRNA(Ala) and it encodes a 'tag peptide', a short internal open reading frame. During trans-translation Ala-aminoacylated tmRNA acts like a tRNA, entering the A-site of stalled ribosomes, displacing the stalled mRNA. The ribosome then switches to translate the ORF on the tmRNA; the nascent peptide is terminated with the 'tag peptide' encoded by the tmRNA and targeted for degradation. The ribosome is freed to recommence translation, which seems to be the essential function of trans-translation. The sequence is that of SsrA-binding protein from Stenotrophomonas maltophilia (strain R551-3).